The primary structure comprises 308 residues: Mycothiol acetyltransferase (308 aa).

1D-myo-inositol 2-(L-cysteinylamino)-2-deoxy-alpha-D-glucopyranoside is bound at residue Glu-44. 83 to 85 (AVV) provides a ligand contact to acetyl-CoA. The N-acetyltransferase domain occupies 161-308 (VRLRTYAGSA…DVAYGRPEGD (148 aa)). Glu-188, Lys-230, and Glu-238 together coordinate 1D-myo-inositol 2-(L-cysteinylamino)-2-deoxy-alpha-D-glucopyranoside. Residues 242 to 244 (VGV) and 249 to 255 (QGRGLGR) each bind acetyl-CoA. Tyr-276 lines the 1D-myo-inositol 2-(L-cysteinylamino)-2-deoxy-alpha-D-glucopyranoside pocket. 281 to 286 (NTAALH) provides a ligand contact to acetyl-CoA.

Belongs to the acetyltransferase family. MshD subfamily. As to quaternary structure, monomer.

It catalyses the reaction 1D-myo-inositol 2-(L-cysteinylamino)-2-deoxy-alpha-D-glucopyranoside + acetyl-CoA = mycothiol + CoA + H(+). Catalyzes the transfer of acetyl from acetyl-CoA to desacetylmycothiol (Cys-GlcN-Ins) to form mycothiol. In Gordonia bronchialis (strain ATCC 25592 / DSM 43247 / BCRC 13721 / JCM 3198 / KCTC 3076 / NBRC 16047 / NCTC 10667) (Rhodococcus bronchialis), this protein is Mycothiol acetyltransferase.